The sequence spans 69 residues: Large ribosomal subunit protein uL29 (69 aa).

Belongs to the universal ribosomal protein uL29 family.

The protein is Large ribosomal subunit protein uL29 of Synechococcus sp. (strain WH7803).